The chain runs to 511 residues: Glucans biosynthesis protein G (511 aa).

The signal sequence occupies residues 1–22 (MMKMRWLSAAVMLTLYTSSSWA).

The protein belongs to the OpgD/OpgG family.

The protein resides in the periplasm. The protein operates within glycan metabolism; osmoregulated periplasmic glucan (OPG) biosynthesis. Involved in the biosynthesis of osmoregulated periplasmic glucans (OPGs). This Escherichia coli (strain K12 / MC4100 / BW2952) protein is Glucans biosynthesis protein G.